The primary structure comprises 231 residues: NADH-ubiquinone oxidoreductase chain 4 (231 aa).

6 helical membrane-spanning segments follow: residues Pro1–Ile21, Met34–Leu54, Leu62–Trp84, Ala89–Tyr111, Ile128–Pro148, and Thr169–Leu189.

This sequence belongs to the complex I subunit 4 family.

It localises to the mitochondrion membrane. The enzyme catalyses a ubiquinone + NADH + 5 H(+)(in) = a ubiquinol + NAD(+) + 4 H(+)(out). Functionally, core subunit of the mitochondrial membrane respiratory chain NADH dehydrogenase (Complex I) that is believed to belong to the minimal assembly required for catalysis. Complex I functions in the transfer of electrons from NADH to the respiratory chain. The immediate electron acceptor for the enzyme is believed to be ubiquinone. In Bothrops erythromelas (Caatinga lance head), this protein is NADH-ubiquinone oxidoreductase chain 4 (MT-ND4).